Reading from the N-terminus, the 1187-residue chain is uncharacterized protein (1187 aa).

Disordered regions lie at residues 302–405, 419–451, 511–551, 1095–1134, and 1148–1187; these read QKSQ…KPVG, QAFSPLLSSAGPGSPAAETKTEETTLGHGRASK, KAPG…LRLE, KSQRTPQGEQSRNMWAGLLSPEPGQSGDTEEVRGTPKLPD, and PHLPKQSKASRPTGGSFSSEGTGSQTSLEDSPHTSPPASL. Positions 321-333 are enriched in low complexity; that stretch reads LPLSGPAGAPPLG. Residues 352–361 are compositionally biased toward basic residues; that stretch reads SRRKARHKAS. Composition is skewed to low complexity over residues 422–435 and 517–534; these read SPLLSSAGPGSPAA and GTTLPTTSGSGPLSGEPP. The span at 1096–1107 shows a compositional bias: polar residues; that stretch reads SQRTPQGEQSRN. Residues 1160-1174 show a composition bias toward low complexity; that stretch reads TGGSFSSEGTGSQTS.

This is an uncharacterized protein from Mus musculus (Mouse).